The primary structure comprises 225 residues: UPF0758 protein Mhun_2739 (225 aa).

In terms of domain architecture, MPN spans Arg102–Leu225. Residues His174, His176, and Asp187 each contribute to the Zn(2+) site. Positions His174–Asp187 match the JAMM motif motif.

The protein belongs to the UPF0758 family.

The sequence is that of UPF0758 protein Mhun_2739 from Methanospirillum hungatei JF-1 (strain ATCC 27890 / DSM 864 / NBRC 100397 / JF-1).